Consider the following 318-residue polypeptide: tRNA dimethylallyltransferase (318 aa).

An ATP-binding site is contributed by 13 to 20 (GPTAVGKT). 15–20 (TAVGKT) contacts substrate. The segment at 38–41 (DSMQ) is interaction with substrate tRNA.

It belongs to the IPP transferase family. In terms of assembly, monomer. Mg(2+) is required as a cofactor.

The enzyme catalyses adenosine(37) in tRNA + dimethylallyl diphosphate = N(6)-dimethylallyladenosine(37) in tRNA + diphosphate. Functionally, catalyzes the transfer of a dimethylallyl group onto the adenine at position 37 in tRNAs that read codons beginning with uridine, leading to the formation of N6-(dimethylallyl)adenosine (i(6)A). The sequence is that of tRNA dimethylallyltransferase from Bacillus pumilus (strain SAFR-032).